Here is a 97-residue protein sequence, read N- to C-terminus: UPF0473 protein Exig_2070 (97 aa).

It belongs to the UPF0473 family.

The protein is UPF0473 protein Exig_2070 of Exiguobacterium sibiricum (strain DSM 17290 / CCUG 55495 / CIP 109462 / JCM 13490 / 255-15).